A 49-amino-acid chain; its full sequence is Large ribosomal subunit protein bL33B (49 aa).

Belongs to the bacterial ribosomal protein bL33 family.

The chain is Large ribosomal subunit protein bL33B from Listeria welshimeri serovar 6b (strain ATCC 35897 / DSM 20650 / CCUG 15529 / CIP 8149 / NCTC 11857 / SLCC 5334 / V8).